The chain runs to 350 residues: Glycogenin-1 (350 aa).

N-acetylthreonine is present on T2. UDP-binding residues include L9, T11, N12, and Y15. The UDP-alpha-D-glucose site is built by L9, T11, N12, and Y15. S44 carries the post-translational modification Phosphoserine. A UDP-binding site is contributed by R77. 10 residues coordinate UDP-alpha-D-glucose: R77, K86, D102, A103, D104, N133, S134, D160, D163, and Q164. UDP is bound by residues D102, A103, and D104. D102 lines the Mn(2+) pocket. D104 provides a ligand contact to Mn(2+). Y195 carries an O-linked (Glc...) tyrosine glycan. Positions 212, 215, and 218 each coordinate UDP. H212 serves as a coordination point for Mn(2+). Residues G215 and K218 each coordinate UDP-alpha-D-glucose. Residues S301–M333 form an interaction with GYS1 region.

Belongs to the glycosyltransferase 8 family. Glycogenin subfamily. As to quaternary structure, part of the GYS1-GYG1 complex, a heterooctamer composed of a tetramer of GYS1 and 2 dimers of GYG1, where each GYS1 protomer binds to one GYG1 subunit (via GYG1 C-terminus); the GYS1 tetramer may dissociate from GYG1 dimers to continue glycogen polymerization on its own. May also form a heterooctamer complex with GYS2 (via GYG1 C-terminus). Requires Mn(2+) as cofactor. In terms of processing, self-glycosylated by the transfer of glucose residues from UDP-glucose to itself, forming an alpha-1,4-glycan of around 10 residues attached to Tyr-195. Post-translationally, phosphorylated. As to expression, highly expressed in skeletal muscle and heart, with lower levels in brain, lung, kidney and pancreas.

The protein localises to the cytoplasm. It is found in the nucleus. It carries out the reaction L-tyrosyl-[glycogenin] + UDP-alpha-D-glucose = alpha-D-glucosyl-L-tyrosyl-[glycogenin] + UDP + H(+). The catalysed reaction is [1,4-alpha-D-glucosyl](n)-L-tyrosyl-[glycogenin] + UDP-alpha-D-glucose = [1,4-alpha-D-glucosyl](n+1)-L-tyrosyl-[glycogenin] + UDP + H(+). It functions in the pathway glycan biosynthesis; glycogen biosynthesis. Its activity is regulated as follows. Inhibited by palladium ions. Its function is as follows. Glycogenin participates in the glycogen biosynthetic process along with glycogen synthase and glycogen branching enzyme. It catalyzes the formation of a short alpha (1,4)-glucosyl chain covalently attached via a glucose 1-O-tyrosyl linkage to internal tyrosine residues and these chains act as primers for the elongation reaction catalyzed by glycogen synthase. This Homo sapiens (Human) protein is Glycogenin-1.